Here is a 585-residue protein sequence, read N- to C-terminus: Putative ABC transporter ATP-binding protein MG187 (585 aa).

The ABC transporter domain occupies 8–468; it reads IELKNIVVDF…PANEFVARFL (461 aa). 40–47 contributes to the ATP binding site; it reads GPSGCGKT.

The protein belongs to the ABC transporter superfamily.

The sequence is that of Putative ABC transporter ATP-binding protein MG187 from Mycoplasma genitalium (strain ATCC 33530 / DSM 19775 / NCTC 10195 / G37) (Mycoplasmoides genitalium).